Consider the following 174-residue polypeptide: Superoxide dismutase [Cu-Zn] (174 aa).

The first 20 residues, 1–20, serve as a signal peptide directing secretion; that stretch reads MMKSLFIASTMVLMAFPAFA. Cu cation-binding residues include histidine 68, histidine 70, and histidine 93. A disulfide bond links cysteine 75 and cysteine 170. Zn(2+)-binding residues include histidine 93, histidine 102, histidine 110, and aspartate 113. Histidine 148 is a binding site for Cu cation.

It belongs to the Cu-Zn superoxide dismutase family. In terms of assembly, homodimer. Cu cation is required as a cofactor. It depends on Zn(2+) as a cofactor.

The protein localises to the periplasm. It carries out the reaction 2 superoxide + 2 H(+) = H2O2 + O2. Destroys radicals which are normally produced within the cells and which are toxic to biological systems. This Brucella melitensis biotype 1 (strain ATCC 23456 / CCUG 17765 / NCTC 10094 / 16M) protein is Superoxide dismutase [Cu-Zn] (sodC).